Consider the following 104-residue polypeptide: Pole-localizer protein TmaR (104 aa).

2 coiled-coil regions span residues 7 to 34 (IVNQ…NRKR) and 76 to 96 (SAEI…LTEE).

This sequence belongs to the pole-localizer TmaR family.

Its subcellular location is the cytoplasm. Its function is as follows. Pole-localizer protein involved in the regulation of several cellular processes. In Vibrio campbellii (strain ATCC BAA-1116), this protein is Pole-localizer protein TmaR.